The sequence spans 546 residues: Chaperonin GroEL (546 aa).

ATP is bound by residues 30–33 (TLGP), Lys51, 87–91 (DGTTT), Gly415, 479–481 (NAA), and Asp495.

This sequence belongs to the chaperonin (HSP60) family. In terms of assembly, forms a cylinder of 14 subunits composed of two heptameric rings stacked back-to-back. Interacts with the co-chaperonin GroES.

The protein resides in the cytoplasm. It catalyses the reaction ATP + H2O + a folded polypeptide = ADP + phosphate + an unfolded polypeptide.. Together with its co-chaperonin GroES, plays an essential role in assisting protein folding. The GroEL-GroES system forms a nano-cage that allows encapsulation of the non-native substrate proteins and provides a physical environment optimized to promote and accelerate protein folding. In Paraburkholderia phytofirmans (strain DSM 17436 / LMG 22146 / PsJN) (Burkholderia phytofirmans), this protein is Chaperonin GroEL.